Here is a 1852-residue protein sequence, read N- to C-terminus: Voltage-dependent L-type calcium channel subunit alpha-1S (1852 aa).

The disordered stretch occupies residues 1-23; sequence MEPPSPQDEGLRKKQPKKPVPEI. The Cytoplasmic segment spans residues 1–51; that stretch reads MEPPSPQDEGLRKKQPKKPVPEILPRPPRALFCLTLQNPLRKACISIVEWK. Residues 38-337 form an I repeat; it reads NPLRKACISI…LVLGVLSGEF (300 aa). The chain crosses the membrane as a helical span at residues 52 to 70; the sequence is PFETIILLTIFANCVALAV. The Extracellular segment spans residues 71 to 85; that stretch reads YLPMPEDDNNTLNLG. N-linked (GlcNAc...) asparagine glycosylation occurs at Asn79. The helical transmembrane segment at 86–106 threads the bilayer; the sequence is LEKLEYFFLIVFSIEAAMKII. At 107 to 115 the chain is on the cytoplasmic side; the sequence is AYGFLFHQD. The chain crosses the membrane as a helical span at residues 116 to 136; that stretch reads AYLRSGWNVLDFIIVFLGVFT. The Extracellular segment spans residues 137-160; that stretch reads VILEQVNIIQTNTAPMSSKGAGLD. Residues 161 to 179 form a helical membrane-spanning segment; the sequence is VKALRAFRVLRPLRLVSGV. At 180–196 the chain is on the cytoplasmic side; it reads PSLQVVLNSIFKAMLPL. The chain crosses the membrane as a helical span at residues 197–218; sequence FHIALLVLFMVIIYAIIGLELF. The Extracellular segment spans residues 219 to 279; the sequence is KGKMHKTCYF…HGITHFDNFG (61 aa). 2 disulfides stabilise this stretch: Cys226–Cys254 and Cys245–Cys261. Residue Asn257 is glycosylated (N-linked (GlcNAc...) asparagine). Residues 280 to 301 constitute an intramembrane region (pore-forming); sequence FSMLTVYQCISMEGWTDVLYWV. A Selectivity filter of repeat I motif is present at residues 290–293; sequence SMEG. Glu292 is a binding site for Ca(2+). The Extracellular portion of the chain corresponds to 302-309; that stretch reads NDAIGNEW. Residues 310–330 traverse the membrane as a helical segment; sequence PWIYFVTLILLGSFFILNLVL. Over 331–432 the chain is Cytoplasmic; sequence GVLSGEFTKE…WKCHDLVKSK (102 aa). The interval 357 to 374 is binding to the beta subunit; sequence QQLEEDLRGYMSWITQGE. Residues Ser393 and Ser397 each carry the phosphoserine modification. An II repeat occupies 418-664; that stretch reads NRVFRWKCHD…VFLAIAVDNL (247 aa). The helical transmembrane segment at 433–451 threads the bilayer; it reads VFYWLVILIVALNTLSIAS. Residues 452–462 are Extracellular-facing; that stretch reads EHHNQPLWLTH. Residues 463 to 483 traverse the membrane as a helical segment; it reads LQDVANRVLLTLFTIEMLMKM. The Cytoplasmic portion of the chain corresponds to 484-494; the sequence is YGLGLRQYFMS. A helical transmembrane segment spans residues 495–514; that stretch reads IFNRFDCFVVCSGILEILLV. Residues 515 to 523 are Extracellular-facing; sequence ESGAMSPLG. Residues 524–542 traverse the membrane as a helical segment; sequence ISVLRCIRLLRLFKITKYW. Residues 543–561 lie on the Cytoplasmic side of the membrane; sequence TSLSNLVASLLNSIRSIAS. The helical transmembrane segment at 562–581 threads the bilayer; the sequence is LLLLLFLFIIIFALLGMQLF. Residues 582 to 601 are Extracellular-facing; sequence GGRYDFEDTEVRRSNFDNFP. The segment at residues 602–623 is an intramembrane region (pore-forming); it reads QALISVFQVLTGEDWNSVMYNG. Residues 612 to 615 carry the Selectivity filter of repeat II motif; that stretch reads TGED. Glu614 contacts Ca(2+). Topologically, residues 624–633 are extracellular; sequence IMAYGGPTYP. Residues 634–653 form a helical membrane-spanning segment; that stretch reads GVLVCIYFIILFVCGNYILL. The Cytoplasmic segment spans residues 654 to 799; the sequence is NVFLAIAVDN…VLCHRIVNAT (146 aa). 2 disordered regions span residues 675 to 712 and 731 to 757; these read KAKA…SKGE and EVKD…VSPR. The residue at position 687 (Ser687) is a Phosphoserine; by PKA. The segment covering 690-711 has biased composition (basic and acidic residues); that stretch reads LPDKSEEERATVTKKLEQKSKG. A compositionally biased stretch (acidic residues) spans 742–751; that stretch reads PGDDEEDEPE. The III repeat unit spans residues 768 to 1068; it reads EKAVPIPEAS…IFVGFVIVTF (301 aa). Residues 800-818 form a helical membrane-spanning segment; sequence WFTNFILLFILLSSAALAA. The Extracellular portion of the chain corresponds to 819 to 830; that stretch reads EDPIRADSMRNQ. A helical transmembrane segment spans residues 831-850; sequence ILEYFDYVFTAVFTVEIVLK. The Cytoplasmic segment spans residues 851–866; sequence MTTYGAFLHKGSFCRN. The chain crosses the membrane as a helical span at residues 867–885; the sequence is YFNILDLLVVAVSLISMGL. The Extracellular segment spans residues 886–892; it reads ESSAISV. A helical transmembrane segment spans residues 893-911; it reads VKILRVLRVLRPLRAINRA. The Cytoplasmic portion of the chain corresponds to 912–930; that stretch reads KGLKHVVQCVFVAIRTIGN. Residues 931-950 traverse the membrane as a helical segment; the sequence is IVLVTTLLQFMFACIGVQLF. Residues 951–1000 lie on the Extracellular side of the membrane; that stretch reads KGKFYSCNDLSKMTEEECRGYYYIYKDGDPTQIELRPRQWIHNDFHFDNV. The cysteines at positions 957 and 968 are disulfide-linked. The tract at residues 988–1077 is dihydropyridine binding; that stretch reads RQWIHNDFHF…FQEQGETEYK (90 aa). The pore-forming intramembrane region spans 1001–1021; sequence LSAMMSLFTVSTFEGWPQLLY. The Selectivity filter of repeat III motif lies at 1012–1015; sequence TFEG. A Ca(2+)-binding site is contributed by Glu1014. The Extracellular segment spans residues 1022–1038; that stretch reads KAIDSNEEDTGPVYNNR. Residues 1039 to 1060 traverse the membrane as a helical segment; it reads VEMAIFFIIYIILIAFFMMNIF. The Cytoplasmic portion of the chain corresponds to 1061–1118; the sequence is VGFVIVTFQEQGETEYKNCELDKNQRQCVQYALKARPLRCYIPKNPYQYQVWYVVTSS. Residues 1105-1384 form an IV repeat; the sequence is NPYQYQVWYV…LFVAVIMDNF (280 aa). Residues 1119–1140 form a helical membrane-spanning segment; the sequence is YFEYLMFALIMLNTICLGMQHY. Asn1141 carries an N-linked (GlcNAc...) asparagine glycan. Residues 1141-1148 lie on the Extracellular side of the membrane; that stretch reads NQSEQMNH. A helical transmembrane segment spans residues 1149 to 1170; it reads ISDILNVAFTIIFTLEMVLKLI. Residues 1171-1180 are Cytoplasmic-facing; that stretch reads AFKPRGYFGD. Residues 1181–1200 form a helical membrane-spanning segment; sequence PWNVFDFLIVIGSIIDVILS. Topologically, residues 1201–1231 are extracellular; that stretch reads EIDTFLASSGGLYCLGGGCGNVDPDESARIS. The chain crosses the membrane as a helical span at residues 1232–1250; it reads SAFFRLFRVMRLVKLLNRA. Residues 1251 to 1268 are Cytoplasmic-facing; the sequence is EGVRTLLWTFIKSFQALP. The helical transmembrane segment at 1269–1289 threads the bilayer; the sequence is YVALLIVMLFFIYAVIGMQMF. Residues 1290-1311 lie on the Extracellular side of the membrane; sequence GKIAMVDGTQINRNNNFQTFPQ. The segment at residues 1312–1330 is an intramembrane region (pore-forming); that stretch reads AVLLLFRCATGEAWQEILL. A Selectivity filter of repeat IV motif is present at residues 1321-1324; sequence TGEA. The Extracellular portion of the chain corresponds to 1331-1356; it reads ACSYGKLCDPESDYAPGEEHTCGTNF. The tract at residues 1337–1403 is dihydropyridine binding; sequence LCDPESDYAP…LGPHHLDEFK (67 aa). Cys1338 and Cys1352 are joined by a disulfide. Phenylalkylamine binding regions lie at residues 1349-1391 and 1349-1392; these read EHTC…TRDW and EHTC…RDWS. A helical membrane pass occupies residues 1357–1381; sequence AYYYFISFYMLCAFLIINLFVAVIM. Topologically, residues 1382–1852 are cytoplasmic; sequence DNFDYLTRDW…PEGGAVPWEP (471 aa). An interaction with calmodulin region spans residues 1522 to 1542; that stretch reads KFYATFLIQEHFRKFMKRQEE. Ser1575 is modified (phosphoserine; by PKA and CAMK2). A Phosphothreonine modification is found at Thr1579. Position 1617 is a phosphoserine; by PKA (Ser1617). Disordered stretches follow at residues 1702-1721 and 1727-1762; these read GPLS…HVDK and TQRG…PTSR. Over residues 1747-1757 the composition is skewed to basic and acidic residues; that stretch reads KAEHPVQKEGK.

It belongs to the calcium channel alpha-1 subunit (TC 1.A.1.11) family. CACNA1S subfamily. As to quaternary structure, component of a calcium channel complex consisting of a pore-forming alpha subunit (CACNA1S) and the ancillary subunits CACNB1 or CACNB2, CACNG1 and CACNA2D1. The channel complex contains alpha, beta, gamma and delta subunits in a 1:1:1:1 ratio, i.e. it contains either CACNB1 or CACNB2. CACNA1S channel activity is modulated by the auxiliary subunits (CACNB1 or CACNB2, CACNG1 and CACNA2D1). Interacts with DYSF and JSRP1. Interacts with RYR1. Interacts with STAC, STAC2 and STAC3 (via their SH3 domains). Interacts with CALM. The alpha-1S subunit is found in two isoforms in the skeletal muscle: a minor form of 212 kDa containing the complete amino acid sequence, and a major form of 190 kDa derived from the full-length form by post-translational proteolysis close to Phe-1690. In terms of processing, phosphorylated. Phosphorylation by PKA activates the calcium channel. Both the minor and major forms are phosphorylated in vitro by PKA. Phosphorylation at Ser-1575 is involved in beta-adrenergic-mediated regulation of the channel.

The protein localises to the cell membrane. The protein resides in the sarcolemma. Its subcellular location is the T-tubule. The catalysed reaction is Ca(2+)(in) = Ca(2+)(out). Channel activity is blocked by dihydropyridines (DHP), phenylalkylamines, and by benzothiazepines. Its function is as follows. Pore-forming, alpha-1S subunit of the voltage-gated calcium channel that gives rise to L-type calcium currents in skeletal muscle. Calcium channels containing the alpha-1S subunit play an important role in excitation-contraction coupling in skeletal muscle via their interaction with RYR1, which triggers Ca(2+) release from the sarcplasmic reticulum and ultimately results in muscle contraction. Long-lasting (L-type) calcium channels belong to the 'high-voltage activated' (HVA) group. In Mus musculus (Mouse), this protein is Voltage-dependent L-type calcium channel subunit alpha-1S (Cacna1s).